Consider the following 433-residue polypeptide: MSANSFKLLVKNATQLVLVCRNGEKYLTRDEMQALAVLENASVLIGHDGLIKAVGPADVIETQFEGAKFDNVLDASGMCVLPGLVDAHTHPVWAGDRVHEFAMKLAGATYMEVHEAGGGIHFTVAHTRSASEQHLLAALKSRLERMMRAGTTLVECKSGYGLELDIEVKMLRVINSARKSLPIGISATYCGAHAVPKGKTMEEATKDIVAVQLPKIKHLSASGDLQVDNIDVFCEKGVFDLTSTRCILQAGKDMGLNINFHGDELHPMNSAHLGAELGALAISHLEEVTDDGIVAMAKSKTSAVLLPTTAYILRLTPPRARDMLDAGVIVALGSDFNPNAYCFSMPMVMHLACVMMKMSMPEALAASTINAAYALNRSQTHGSLEVGKQGDLVIINAPRWEHLVYQFGGHQELIRYVIIKGDFVYENDKVLNL.

The 4-imidazolone-5-propanoate site is built by tyrosine 160 and histidine 193. An N-formimidoyl-L-glutamate-binding site is contributed by tyrosine 160. Fe(3+) is bound at residue histidine 261. Histidine 261 contacts Zn(2+). Glutamate 264 lines the 4-imidazolone-5-propanoate pocket. Fe(3+) is bound at residue aspartate 335. Aspartate 335 provides a ligand contact to Zn(2+). Residue asparagine 337 participates in N-formimidoyl-L-glutamate binding.

Belongs to the metallo-dependent hydrolases superfamily. HutI family. Zn(2+) serves as cofactor. Requires Fe(3+) as cofactor.

It catalyses the reaction 4-imidazolone-5-propanoate + H2O = N-formimidoyl-L-glutamate. The protein operates within amino-acid degradation; L-histidine degradation into L-glutamate; N-formimidoyl-L-glutamate from L-histidine: step 3/3. The chain is Probable imidazolonepropionase (amdhd1) from Danio rerio (Zebrafish).